Here is a 111-residue protein sequence, read N- to C-terminus: Ferredoxin, 2Fe-2S (111 aa).

Residues Cys10, Cys23, Cys56, and Cys60 each coordinate [2Fe-2S] cluster.

In terms of assembly, homodimer in solution. The cofactor is [2Fe-2S] cluster.

Its function is as follows. Ferredoxins are iron-sulfur proteins that transfer electrons in a wide variety of metabolic reactions. This chain is Ferredoxin, 2Fe-2S (fdx4), found in Aquifex aeolicus (strain VF5).